A 378-amino-acid chain; its full sequence is Zinc finger protein DPF3 (378 aa).

A Glycyl lysine isopeptide (Lys-Gly) (interchain with G-Cter in SUMO2) cross-link involves residue Lys-99. The interval 145 to 193 (VLENDENVEEGNEEEDLEEDIPKRKNRTRGRARGSAGGRRRHDAASQED) is disordered. Positions 148-163 (NDENVEEGNEEEDLEE) are enriched in acidic residues. Basic residues predominate over residues 168–186 (RKNRTRGRARGSAGGRRRH). A C2H2-type zinc finger spans residues 198–221 (YVCDICGKRYKNRPGLSYHYAHTH). The tract at residues 225 to 254 (EEGDEAQDQETRSPPNHRNENHRPQKGPDG) is disordered. PHD-type zinc fingers lie at residues 259–319 (NNYC…CKSC) and 316–366 (CKSC…CWEL). The interval 317–332 (KSCILCGTSENDDQLL) is interaction with HDGFL2. Gly-323 bears the Phosphoserine mark.

Belongs to the requiem/DPF family. As to quaternary structure, component of the BAF complex, which includes at least actin (ACTB), ARID1A, ARID1B/BAF250, SMARCA2, SMARCA4/BRG1/BAF190A, ACTL6A/BAF53, ACTL6B/BAF53B, SMARCE1/BAF57, SMARCC1/BAF155, SMARCC2/BAF170, SMARCB1/SNF5/INI1, and one or more of SMARCD1/BAF60A, SMARCD2/BAF60B, or SMARCD3/BAF60C. In muscle cells, the BAF complex also contains DPF3. Interacts with acetylated histones H3 and H4. Component of neuron-specific chromatin remodeling complex (nBAF complex) composed of at least, ARID1A/BAF250A or ARID1B/BAF250B, SMARCD1/BAF60A, SMARCD3/BAF60C, SMARCA2/BRM/BAF190B, SMARCA4/BRG1/BAF190A, SMARCB1/BAF47, SMARCC1/BAF155, SMARCE1/BAF57, SMARCC2/BAF170, DPF1/BAF45B, DPF3/BAF45C, ACTL6B/BAF53B and actin. Interacts with HDGFL2, SMARCA4/BRG1/BAF190A, SMARCC1/BAF155 and SMARCD1/BAF60A. Phosphorylation at Ser-323 enhances its interaction with HDGFL2.

The protein localises to the nucleus. In terms of biological role, belongs to the neuron-specific chromatin remodeling complex (nBAF complex). During neural development a switch from a stem/progenitor to a post-mitotic chromatin remodeling mechanism occurs as neurons exit the cell cycle and become committed to their adult state. The transition from proliferating neural stem/progenitor cells to post-mitotic neurons requires a switch in subunit composition of the npBAF and nBAF complexes. As neural progenitors exit mitosis and differentiate into neurons, npBAF complexes which contain ACTL6A/BAF53A and PHF10/BAF45A, are exchanged for homologous alternative ACTL6B/BAF53B and DPF1/BAF45B or DPF3/BAF45C subunits in neuron-specific complexes (nBAF). The npBAF complex is essential for the self-renewal/proliferative capacity of the multipotent neural stem cells. The nBAF complex along with CREST plays a role regulating the activity of genes essential for dendrite growth. Muscle-specific component of the BAF complex, a multiprotein complex involved in transcriptional activation and repression of select genes by chromatin remodeling (alteration of DNA-nucleosome topology). Specifically binds acetylated lysines on histone 3 and 4 (H3K14ac, H3K9ac, H4K5ac, H4K8ac, H4K12ac, H4K16ac). In the complex, it acts as a tissue-specific anchor between histone acetylations and methylations and chromatin remodeling. It thereby probably plays an essential role in heart and skeletal muscle development. Functionally, acts as a regulator of myogenesis in cooperation with HDGFL2. Mediates the interaction of HDGFL2 with the BAF complex. HDGFL2-DPF3a activate myogenic genes by increasing chromatin accessibility through recruitment of SMARCA4/BRG1/BAF190A (ATPase subunit of the BAF complex) to myogenic gene promoters. The polypeptide is Zinc finger protein DPF3 (DPF3) (Homo sapiens (Human)).